An 80-amino-acid polypeptide reads, in one-letter code: Small ribosomal subunit protein bS16 (80 aa).

It belongs to the bacterial ribosomal protein bS16 family.

The sequence is that of Small ribosomal subunit protein bS16 from Wigglesworthia glossinidia brevipalpis.